A 939-amino-acid polypeptide reads, in one-letter code: Valine--tRNA ligase (939 aa).

The short motif at 47-57 (PNVTGILHMGH) is the 'HIGH' region element. Residues 563–567 (KLSKS) carry the 'KMSKS' region motif. ATP is bound at residue K566. Residues 873 to 939 (AEHLAKEHAR…QSILDKIASL (67 aa)) are a coiled coil.

Belongs to the class-I aminoacyl-tRNA synthetase family. ValS type 1 subfamily. As to quaternary structure, monomer.

It is found in the cytoplasm. It carries out the reaction tRNA(Val) + L-valine + ATP = L-valyl-tRNA(Val) + AMP + diphosphate. Its function is as follows. Catalyzes the attachment of valine to tRNA(Val). As ValRS can inadvertently accommodate and process structurally similar amino acids such as threonine, to avoid such errors, it has a 'posttransfer' editing activity that hydrolyzes mischarged Thr-tRNA(Val) in a tRNA-dependent manner. The polypeptide is Valine--tRNA ligase (Chlamydia muridarum (strain MoPn / Nigg)).